Reading from the N-terminus, the 704-residue chain is Myb-related protein B (704 aa).

3 consecutive HTH myb-type domains span residues 26 to 77 (RDNR…LRVL), 78 to 133 (NPDL…NPEV), and 134 to 184 (KKSC…KRKV). The H-T-H motif DNA-binding region spans 54-77 (WKFLASHFPNRTDQQCQYRWLRVL). Lysine 104 participates in a covalent cross-link: Glycyl lysine isopeptide (Lys-Gly) (interchain with G-Cter in SUMO2). 2 DNA-binding regions (H-T-H motif) span residues 106 to 129 (WTLI…HNHL) and 157 to 180 (WAEI…NSTI). Residue lysine 197 forms a Glycyl lysine isopeptide (Lys-Gly) (interchain with G-Cter in SUMO2) linkage. Residue threonine 267 is modified to Phosphothreonine. Lysine 275 participates in a covalent cross-link: Glycyl lysine isopeptide (Lys-Gly) (interchain with G-Cter in SUMO2). Serine 282 carries the post-translational modification Phosphoserine. The tract at residues 325 to 412 (LSKFDLPEEP…GSGIGTPPSV (88 aa)) is disordered. Residues 339–366 (SVVSSPVQPQTSQQQQEEALQSSQQAAT) show a composition bias toward low complexity. Serine 396 carries the phosphoserine modification. Residue lysine 414 forms a Glycyl lysine isopeptide (Lys-Gly) (interchain with G-Cter in SUMO2) linkage. A phosphothreonine; by CDK2 mark is found at threonine 443 and threonine 447. Glycyl lysine isopeptide (Lys-Gly) (interchain with G-Cter in SUMO2) cross-links involve residues lysine 450 and lysine 485. 2 positions are modified to phosphothreonine; by CDK2: threonine 490 and threonine 497. Glycyl lysine isopeptide (Lys-Gly) (interchain with G-Cter in SUMO2) cross-links involve residues lysine 502 and lysine 513. Threonine 524 carries the post-translational modification Phosphothreonine; by CDK2. Residues lysine 527, lysine 537, and lysine 550 each participate in a glycyl lysine isopeptide (Lys-Gly) (interchain with G-Cter in SUMO2) cross-link. The residue at position 581 (serine 581) is a Phosphoserine; by CDK2. Glycyl lysine isopeptide (Lys-Gly) (interchain with G-Cter in SUMO2) cross-links involve residues lysine 588 and lysine 600. Residues 603–626 (SSTMPKPLSLPTSVTPSSCGFTSP) form a disordered region. Residues 607–620 (PKPLSLPTSVTPSS) are compositionally biased toward low complexity. Glycyl lysine isopeptide (Lys-Gly) (interchain with G-Cter in SUMO2) cross-links involve residues lysine 629, lysine 643, and lysine 652.

Component of the DREAM complex (also named LINC complex) at least composed of E2F4, E2F5, LIN9, LIN37, LIN52, LIN54, MYBL1, MYBL2, RBL1, RBL2, RBBP4, TFDP1 and TFDP2. The complex exists in quiescent cells where it represses cell cycle-dependent genes. It dissociates in S phase when LIN9, LIN37, LIN52 and LIN54 form a subcomplex that binds to MYBL2. Interacts with CCNF (via the Cyclin N-terminal domain). Phosphorylated by cyclin A/CDK2 during S-phase. Phosphorylation at Thr-524 is probably involved in transcriptional activity.

It localises to the nucleus. Transcription factor involved in the regulation of cell survival, proliferation, and differentiation. Transactivates the expression of the CLU gene. The chain is Myb-related protein B (Mybl2) from Mus musculus (Mouse).